Consider the following 427-residue polypeptide: 3-phosphoshikimate 1-carboxyvinyltransferase (427 aa).

3-phosphoshikimate contacts are provided by lysine 22, serine 23, and arginine 27. Phosphoenolpyruvate is bound at residue lysine 22. The phosphoenolpyruvate site is built by glycine 96 and arginine 124. 3-phosphoshikimate-binding residues include serine 170, serine 171, glutamine 172, serine 198, aspartate 313, asparagine 336, and lysine 340. Phosphoenolpyruvate is bound at residue glutamine 172. Residue aspartate 313 is the Proton acceptor of the active site. Phosphoenolpyruvate-binding residues include arginine 344, arginine 386, and lysine 411.

This sequence belongs to the EPSP synthase family. In terms of assembly, monomer.

The protein resides in the cytoplasm. The catalysed reaction is 3-phosphoshikimate + phosphoenolpyruvate = 5-O-(1-carboxyvinyl)-3-phosphoshikimate + phosphate. It functions in the pathway metabolic intermediate biosynthesis; chorismate biosynthesis; chorismate from D-erythrose 4-phosphate and phosphoenolpyruvate: step 6/7. Functionally, catalyzes the transfer of the enolpyruvyl moiety of phosphoenolpyruvate (PEP) to the 5-hydroxyl of shikimate-3-phosphate (S3P) to produce enolpyruvyl shikimate-3-phosphate and inorganic phosphate. This is 3-phosphoshikimate 1-carboxyvinyltransferase from Aeromonas salmonicida (strain A449).